Consider the following 478-residue polypeptide: PRAME family member 26 (478 aa).

The LRR 1; degenerate repeat unit spans residues 99–126; the sequence is RWKLQVLDLQDVCENFWMVWSEAMARGC. An LRR 2; degenerate repeat occupies 181–205; it reads HLCCKKLKILGMPFRNIRSILKMVN. Residues 206 to 232 form an LRR 3; degenerate repeat; that stretch reads LDCIQEVEVNCKWVLPILTQFTPYLGH. An LRR 4; degenerate repeat occupies 233–268; sequence MRNLQKLVLSHMDVSRYVSPEQKKEIVTQFTTQFLK. 5 LRR repeats span residues 269–294, 295–326, 327–347, 351–378, and 379–403; these read LHCLQKLYMNSVSFLEGHLDQLLSCL, KTSLKVLTITNCVLLESDLKHLSQCPSISQLK, TLDLSGIRLTNYSLVPLQILL, AATLEYLDLDDCGIIDSQVNAILPALSR, and CFELNTFSFCGNPISMATLENLLSH.

It belongs to the PRAME family.

The protein is PRAME family member 26 of Homo sapiens (Human).